The primary structure comprises 718 residues: Sodium/myo-inositol cotransporter (718 aa).

The Extracellular portion of the chain corresponds to 1–9 (MRAVLDTAD). The chain crosses the membrane as a helical span at residues 10-29 (IAIVALYFILVMCIGFFAMW). Residues 30-38 (KSNRSTVSG) lie on the Cytoplasmic side of the membrane. The helical transmembrane segment at 39-57 (YFLAGRSMTWVAIGASLFV) threads the bilayer. Topologically, residues 58–86 (SNIGSEHFIGLAGSGAASGFAVGAWEFNA) are extracellular. Residues 87–110 (LLLLQLLGWVFIPIYIRSGVYTMP) form a helical membrane-spanning segment. Residues 111 to 123 (EYLSKRFGGHRIQ) are Cytoplasmic-facing. A helical transmembrane segment spans residues 124–144 (VYFAALSLILYIFTKLSVDLY). The Extracellular segment spans residues 145–157 (SGALFIQESLGWN). Residues 158–183 (LYVSVILLIGMTALLTVTGGLVAVIY) traverse the membrane as a helical segment. Topologically, residues 184–186 (TDT) are cytoplasmic. The helical transmembrane segment at 187–205 (LQALLMIIGALTLMIISIM) threads the bilayer. Over 206-303 (EIGGFEEVKR…HAKGSTLMAG (98 aa)) the chain is Extracellular. Residue Asn-232 is glycosylated (N-linked (GlcNAc...) asparagine). A helical membrane pass occupies residues 304–324 (FLKLLPMFIIVVPGMISRILF). The Cytoplasmic segment spans residues 325 to 353 (TDDIACINPEHCMLVCGSRAGCSNIAYPR). Residues 354 to 376 (LVMKLVPVGLRGLMMAVMIAALM) traverse the membrane as a helical segment. The Extracellular portion of the chain corresponds to 377 to 406 (SDLDSIFNSASTIFTLDVYKLIRKSASSRE). The helical transmembrane segment at 407–430 (LMIVGRIFVAFMVVISIAWVPIIV) threads the bilayer. Topologically, residues 431-443 (EMQGGQMYLYIQE) are cytoplasmic. Residues 444–462 (VADYLTPPVAALFLLAIFW) traverse the membrane as a helical segment. Residues 463 to 510 (KRCNEQGAFYGGMAGFVLGAVRLILAFAYRAPECDQPDNRPGFIKDIH) are Extracellular-facing. The chain crosses the membrane as a helical span at residues 511-532 (YMYVATGLFWVTGLITVIVSLL). At 533 to 695 (TPPPTKEQIR…QMLEETRQVK (163 aa)) the chain is on the cytoplasmic side. A phosphoserine mark is found at Ser-594 and Ser-632. The helical transmembrane segment at 696–716 (VILNIGLFAVCSLGIFMFVYF) threads the bilayer. The Extracellular portion of the chain corresponds to 717 to 718 (SL).

Belongs to the sodium:solute symporter (SSF) (TC 2.A.21) family. In terms of assembly, interacts with KCNQ2 (via the pore module). Interacts with KCNQ1; this interaction is direct. Forms coregulatory complexes with ion channels KCNQ2-KCNQ3 and KCNQ1-KCNE2.

It localises to the apical cell membrane. It is found in the basolateral cell membrane. It carries out the reaction myo-inositol(out) + 2 Na(+)(out) = myo-inositol(in) + 2 Na(+)(in). The enzyme catalyses scyllo-inositol(out) + 2 Na(+)(out) = scyllo-inositol(in) + 2 Na(+)(in). Its function is as follows. Electrogenic Na(+)-coupled sugar symporter that actively transports myo-inositol and its stereoisomer scyllo-inositol across the plasma membrane, with a Na(+) to sugar coupling ratio of 2:1. Maintains myo-inositol concentration gradient that defines cell volume and fluid balance during osmotic stress, in particular in the fetoplacental unit and central nervous system. Forms coregulatory complexes with voltage-gated K(+) ion channels, allosterically altering ion selectivity, voltage dependence and gating kinetics of the channel. In turn, K(+) efflux through the channel forms a local electrical gradient that modulates electrogenic Na(+)-coupled myo-inositol influx through the transporter. Associates with KCNQ1-KCNE2 channel in the apical membrane of choroid plexus epithelium and regulates the myo-inositol gradient between blood and cerebrospinal fluid with an impact on neuron excitability. Associates with KCNQ2-KCNQ3 channel altering ion selectivity, increasing Na(+) and Cs(+) permeation relative to K(+) permeation. Provides myo-inositol precursor for biosynthesis of phosphoinositides such as PI(4,5)P2, thus indirectly affecting the activity of phosphoinositide-dependent ion channels and Ca(2+) signaling upon osmotic stress. The chain is Sodium/myo-inositol cotransporter from Homo sapiens (Human).